The chain runs to 207 residues: Prolactin (207 aa).

The N-terminal stretch at 1 to 20 (KSRLYFAVTVLMCAFVSING) is a signal peptide. Disulfide bonds link cysteine 66–cysteine 180 and cysteine 197–cysteine 207.

It belongs to the somatotropin/prolactin family. Pituitary gland.

The protein resides in the secreted. In Hypophthalmichthys molitrix (Silver carp), this protein is Prolactin (prl).